An 806-amino-acid chain; its full sequence is Leucine--tRNA ligase (806 aa).

The short motif at 40–51 (PYPSGKGLHVGH) is the 'HIGH' region element. A 'KMSKS' region motif is present at residues 580–584 (KMSKS). Lys-583 is an ATP binding site.

This sequence belongs to the class-I aminoacyl-tRNA synthetase family.

The protein localises to the cytoplasm. It catalyses the reaction tRNA(Leu) + L-leucine + ATP = L-leucyl-tRNA(Leu) + AMP + diphosphate. The protein is Leucine--tRNA ligase of Ureaplasma parvum serovar 3 (strain ATCC 27815 / 27 / NCTC 11736).